A 288-amino-acid chain; its full sequence is MKLLLVFSLLIPSMVFANSSKFQQVEQDAKVIEASLSAHIGISVLDTQTGEYWDYNGNQRFPLTSTFKTIACAKLLYDAEQGEINPKSTIEIKKADLVTYSPVIEKQVGQAITLDDACFATMTTSDNAAANIILNALGGPESVTDFLRQIGDKETRLDRIEPELNEGKLGDLRDTTTPNAIVNTLNELLFGSTLSQDGQKKLEYWMVNNQVTGNLLRSVLPEGWNIADRSGAGGFGARSITAVVWSEAQSPIIVSIYLAQTEASIADRNDAIVKIGRSIFEVYSSQSR.

Residues 1 to 17 (MKLLLVFSLLIPSMVFA) form the signal peptide. The active-site Acyl-ester intermediate is the Ser-65. Cys-72 and Cys-118 are joined by a disulfide. 229-231 (RSG) contributes to the substrate binding site.

It belongs to the class-A beta-lactamase family.

It carries out the reaction a beta-lactam + H2O = a substituted beta-amino acid. With respect to regulation, inhibited by clavulanic acid and sulbactam. Functionally, hydrolyzes carbenicillin. Methicillin and oxacillin are weakly hydrolyzed. The chain is Beta-lactamase CARB-4 (carB4) from Pseudomonas aeruginosa.